A 206-amino-acid chain; its full sequence is Large ribosomal subunit protein uL4 (206 aa).

Residues 46 to 77 (GTRAQKDREQVKHSTKKPFKQKGTGRARAGMT) are disordered. The segment covering 58-70 (HSTKKPFKQKGTG) has biased composition (basic residues).

It belongs to the universal ribosomal protein uL4 family. In terms of assembly, part of the 50S ribosomal subunit.

Its function is as follows. One of the primary rRNA binding proteins, this protein initially binds near the 5'-end of the 23S rRNA. It is important during the early stages of 50S assembly. It makes multiple contacts with different domains of the 23S rRNA in the assembled 50S subunit and ribosome. Forms part of the polypeptide exit tunnel. In Albidiferax ferrireducens (strain ATCC BAA-621 / DSM 15236 / T118) (Rhodoferax ferrireducens), this protein is Large ribosomal subunit protein uL4.